The primary structure comprises 706 residues: Solute carrier organic anion transporter family member 6C1 (706 aa).

The disordered stretch occupies residues Met1–Lys24. The Cytoplasmic segment spans residues Met1–Asp94. Basic and acidic residues predominate over residues Lys7–Lys24. The chain crosses the membrane as a helical span at residues Gly95–Leu118. At Asn119–Thr130 the chain is on the extracellular side. A helical membrane pass occupies residues Glu131 to Ala151. Residues His152 to Arg159 are Cytoplasmic-facing. Residues Thr160–Pro180 form a helical membrane-spanning segment. Residues Phe181 to Cys218 are Extracellular-facing. A glycan (N-linked (GlcNAc...) asparagine) is linked at Asn214. Residues Ile219–Ile241 form a helical membrane-spanning segment. Topologically, residues Thr242–Cys253 are cytoplasmic. Residues Gly254 to Gln277 traverse the membrane as a helical segment. Residues Asn278 to Ser301 are Extracellular-facing. A helical membrane pass occupies residues Gly302 to Phe324. The Cytoplasmic segment spans residues Pro325 to Met374. A helical transmembrane segment spans residues Leu375–Pro396. At His397 to Ala410 the chain is on the extracellular side. The chain crosses the membrane as a helical span at residues Ser411–Ile432. The Cytoplasmic segment spans residues Val433–Lys445. A helical transmembrane segment spans residues Phe446 to Cys466. Over Gln467 to Leu565 the chain is Extracellular. A Kazal-like domain is found at Gly485–Lys540. An N-linked (GlcNAc...) asparagine glycan is attached at Asn486. Cystine bridges form between Cys491-Cys521, Cys497-Cys517, and Cys506-Cys538. N-linked (GlcNAc...) asparagine glycosylation occurs at Asn535. A helical membrane pass occupies residues Lys566 to Ile589. Over Ser590 to Ser604 the chain is Cytoplasmic. The helical transmembrane segment at Leu605–Phe624 threads the bilayer. The Extracellular portion of the chain corresponds to Arg625–Asn652. The chain crosses the membrane as a helical span at residues Ile653–Tyr675. The Cytoplasmic segment spans residues Ala676–Ala706.

Belongs to the organo anion transporter (TC 2.A.60) family. As to quaternary structure, component of the CatSper complex or CatSpermasome composed of the core pore-forming members CATSPER1, CATSPER2, CATSPER3 and CATSPER4 as well as auxiliary members CATSPERB, CATSPERG2, CATSPERD, CATSPERE, CATSPERZ, C2CD6/CATSPERT, SLCO6C1, TMEM249, TMEM262 and EFCAB9. HSPA1 may be an additional auxiliary complex member. The core complex members CATSPER1, CATSPER2, CATSPER3 and CATSPER4 form a heterotetrameric channel. The auxiliary CATSPERB, CATSPERG2, CATSPERD and CATSPERE subunits form a pavilion-like structure over the pore which stabilizes the complex through interactions with CATSPER4, CATSPER3, CATSPER1 and CATSPER2 respectively. SLCO6C1 interacts with CATSPERE and TMEM262/CATSPERH interacts with CATSPERB, further stabilizing the complex. C2CD6/CATSPERT interacts at least with CATSPERD and is required for targeting the CatSper complex in the flagellar membrane.

The protein localises to the cell projection. It localises to the cilium. The protein resides in the flagellum membrane. In terms of biological role, auxiliary component of the CatSper complex, a complex involved in sperm cell hyperactivation. In Mus musculus (Mouse), this protein is Solute carrier organic anion transporter family member 6C1.